Consider the following 277-residue polypeptide: UPF0276 protein PP_2398 (277 aa).

This sequence belongs to the UPF0276 family.

This is UPF0276 protein PP_2398 from Pseudomonas putida (strain ATCC 47054 / DSM 6125 / CFBP 8728 / NCIMB 11950 / KT2440).